A 341-amino-acid polypeptide reads, in one-letter code: Serpentine receptor class beta-1 (341 aa).

The next 7 membrane-spanning stretches (helical) occupy residues 22-42, 66-86, 102-122, 141-161, 188-208, 240-260, and 279-299; these read AQFW…IFLL, FLFA…PLFI, GQLS…GFSI, LGPL…FTVF, CWIL…ILLV, LIVS…TIFI, and GVYI…IKAL.

It belongs to the nematode receptor-like protein srb family.

It localises to the membrane. The protein is Serpentine receptor class beta-1 (srb-1) of Caenorhabditis elegans.